The sequence spans 504 residues: Carnosic acid synthase (504 aa).

A helical transmembrane segment spans residues Phe-4–Tyr-24. Cys-447 is a heme binding site.

Belongs to the cytochrome P450 family. The cofactor is heme. In terms of tissue distribution, expressed in glandular trichomes of young leaves.

The protein resides in the membrane. It catalyses the reaction 11-hydroxyferruginol + 3 reduced [NADPH--hemoprotein reductase] + 3 O2 = carnosate + 3 oxidized [NADPH--hemoprotein reductase] + 4 H2O + 4 H(+). The enzyme catalyses miltiradiene + 2 reduced [NADPH--hemoprotein reductase] + 2 O2 = miltiradien-20-al + 2 oxidized [NADPH--hemoprotein reductase] + 3 H2O + 2 H(+). It carries out the reaction ferruginol + 3 reduced [NADPH--hemoprotein reductase] + 3 O2 = pisiferate + 3 oxidized [NADPH--hemoprotein reductase] + 4 H2O + 4 H(+). The protein operates within secondary metabolite biosynthesis; terpenoid biosynthesis. Its function is as follows. Monooxygenase involved in the biosynthesis of carnosate, a potent antioxidant labdane-related diterpene natural products. Catalyzes the oxidation of 11-hydroxyferruginol to produce carnosate. Mediates the conversion of miltiradien into miltiradien-20-al. Also involved in the production of pisiferic acid and derivative products from ferruginol. This is Carnosic acid synthase from Rosmarinus officinalis (Rosemary).